A 357-amino-acid chain; its full sequence is Anthranilate phosphoribosyltransferase (357 aa).

5-phospho-alpha-D-ribose 1-diphosphate contacts are provided by residues glycine 94, 97 to 98 (GD), threonine 102, 104 to 107 (NLST), 122 to 130 (KHGNRAASS), and glycine 134. Glycine 94 is a binding site for anthranilate. Serine 106 contributes to the Mg(2+) binding site. Residue asparagine 125 participates in anthranilate binding. Arginine 180 serves as a coordination point for anthranilate. 2 residues coordinate Mg(2+): aspartate 238 and glutamate 239.

The protein belongs to the anthranilate phosphoribosyltransferase family. In terms of assembly, homodimer. The cofactor is Mg(2+).

It catalyses the reaction N-(5-phospho-beta-D-ribosyl)anthranilate + diphosphate = 5-phospho-alpha-D-ribose 1-diphosphate + anthranilate. It participates in amino-acid biosynthesis; L-tryptophan biosynthesis; L-tryptophan from chorismate: step 2/5. In terms of biological role, catalyzes the transfer of the phosphoribosyl group of 5-phosphorylribose-1-pyrophosphate (PRPP) to anthranilate to yield N-(5'-phosphoribosyl)-anthranilate (PRA). The protein is Anthranilate phosphoribosyltransferase of Mycobacterium sp. (strain JLS).